Here is a 418-residue protein sequence, read N- to C-terminus: Protein-lysine N-trimethyltransferase SMYD5 (418 aa).

The region spanning 21-352 is the SET domain; the sequence is VSVEVRFVSS…PGEEICISYL (332 aa). The MYND-type zinc finger occupies 98–136; sequence PELCTVRKDLHQNCPHCQVMYCSAECRLAATEQYHQVLC. Y351 provides a ligand contact to S-adenosyl-L-methionine. Positions 385–418 are disordered; sequence ADEPNVTSEEEEEEEEEEEGEPEDAELGDEMTDV.

Belongs to the class V-like SAM-binding methyltransferase superfamily. As to quaternary structure, interacts with the N-CoR complex. Interacts with EHMT2 and CBX5. Post-translationally, ubiquitinated and degradaed by the proteasome in response to mild hypothermia (32 degrees Celsius), relieving repression of the SP1 gene.

It is found in the cytoplasm. It catalyses the reaction L-lysyl-[protein] + 3 S-adenosyl-L-methionine = N(6),N(6),N(6)-trimethyl-L-lysyl-[protein] + 3 S-adenosyl-L-homocysteine + 3 H(+). The enzyme catalyses L-lysyl(20)-[histone H4] + 3 S-adenosyl-L-methionine = N(6),N(6),N(6)-trimethyl-L-lysyl(20)-[histone H4] + 3 S-adenosyl-L-homocysteine + 3 H(+). It carries out the reaction L-lysyl(36)-[histone H3] + 3 S-adenosyl-L-methionine = N(6),N(6),N(6)-trimethyl-L-lysyl(36)-[histone H3] + 3 S-adenosyl-L-homocysteine + 3 H(+). Its function is as follows. Protein-lysine N-trimethyltransferase that specifically catalyzes trimethylation of 'Lys-22' of the RPL40/eL40 subunit of the 60S ribosome, thereby promoting translation elongation and protein synthesis. May also act as a histone methyltransferase in the context of histone octamers, but not on nucleosome substrates: trimethylates 'Lys-36' of histone H3 and 'Lys-20' of histone H4 to form H3K36me3 and H4K20me3, respectively. The histone methyltransferase activity, which is independent of its SET domain, is however unsure in vivo. In association with the NCoR corepressor complex, involved in the repression of toll-like receptor 4 (TLR4)-target inflammatory genes in macrophages, possibly by catalyzing the formation of H4K20me3 at the gene promoters. Plays an important role in embryonic stem (ES) cell self-renewal and differentiation. Maintains genome stability of ES cells during differentiation through regulation of heterochromatin formation and repression of endogenous repetitive DNA elements by promoting H4K20me3 marks. Acts as a regulator of the hypothermia response: its degradation in response to mild hypothermia relieves the formation of H3K36me3 at gene promoters, allowing expression of the neuroprotective gene SP1. The protein is Protein-lysine N-trimethyltransferase SMYD5 of Homo sapiens (Human).